Reading from the N-terminus, the 557-residue chain is Protein Red (557 aa).

The disordered stretch occupies residues 1-84 (MPERDSEPFS…RKKKSYYAKL (84 aa)). Residues 16-25 (DGHDVDDPHS) are compositionally biased toward basic and acidic residues. Low complexity predominate over residues 42–53 (TPRAAPTSAPPS). An N6-acetyllysine mark is found at lysine 98 and lysine 137. Lysine 151 participates in a covalent cross-link: Glycyl lysine isopeptide (Lys-Gly) (interchain with G-Cter in SUMO2). Residues 181–205 (KEKEEEELMEKPQKETKKDEDPENK) are disordered. Serine 287 carries the post-translational modification Phosphoserine. The segment covering 294–303 (RNKKLKKKDK) has biased composition (basic residues). The disordered stretch occupies residues 294-402 (RNKKLKKKDK…PIDVDKGPGS (109 aa)). Basic and acidic residues predominate over residues 304–313 (GKLEEKKPPE). Residues lysine 310 and lysine 331 each participate in a glycyl lysine isopeptide (Lys-Gly) (interchain with G-Cter in SUMO2) cross-link. Positions 332-398 (TPRDKERERY…VDDEPIDVDK (67 aa)) are enriched in basic and acidic residues. Repeat copies occupy residues 342-343 (RE), 344-345 (RE), 346-347 (RD), 348-349 (RE), 350-351 (RD), 352-353 (RD), 354-355 (RD), 356-357 (RE), 358-359 (RE), 360-361 (RE), 362-363 (RD), 364-365 (RE), 366-367 (RE), 368-369 (RE), 370-371 (RD), 372-373 (RE), and 374-375 (RE). Residues 342-375 (RERERDRERDRDRDRERERERDRERERERDRERE) are 17 X 2 AA tandem repeats of R-[ED]. Glycyl lysine isopeptide (Lys-Gly) (interchain with G-Cter in SUMO2) cross-links involve residues lysine 386, lysine 388, lysine 404, and lysine 408. Phosphoserine is present on residues serine 417 and serine 460. At threonine 485 the chain carries Phosphothreonine. Glycyl lysine isopeptide (Lys-Gly) (interchain with G-Cter in SUMO2) cross-links involve residues lysine 496, lysine 501, and lysine 509. Phosphoserine is present on serine 536. Glycyl lysine isopeptide (Lys-Gly) (interchain with G-Cter in SUMO2) cross-links involve residues lysine 541, lysine 543, lysine 544, and lysine 553.

Belongs to the RED family. In terms of assembly, component of the spliceosome B complex. Interacts with SMU1. Interacts with MAD1L1. May interact with DHX15.

The protein localises to the nucleus. The protein resides in the nucleoplasm. Its subcellular location is the chromosome. It localises to the cytoplasm. It is found in the cytoskeleton. The protein localises to the spindle pole. In terms of biological role, involved in pre-mRNA splicing as a component of the spliceosome. Auxiliary spliceosomal protein that regulates selection of alternative splice sites in a small set of target pre-mRNA species. Required for normal mitotic cell cycle progression. Recruits MAD1L1 and MAD2L1 to kinetochores, and is required to trigger the spindle assembly checkpoint. Required for normal accumulation of SMU1. This chain is Protein Red (IK), found in Pongo abelii (Sumatran orangutan).